Consider the following 178-residue polypeptide: ATP synthase subunit delta (178 aa).

Belongs to the ATPase delta chain family. F-type ATPases have 2 components, F(1) - the catalytic core - and F(0) - the membrane proton channel. F(1) has five subunits: alpha(3), beta(3), gamma(1), delta(1), epsilon(1). F(0) has three main subunits: a(1), b(2) and c(10-14). The alpha and beta chains form an alternating ring which encloses part of the gamma chain. F(1) is attached to F(0) by a central stalk formed by the gamma and epsilon chains, while a peripheral stalk is formed by the delta and b chains.

The protein resides in the cell inner membrane. Functionally, f(1)F(0) ATP synthase produces ATP from ADP in the presence of a proton or sodium gradient. F-type ATPases consist of two structural domains, F(1) containing the extramembraneous catalytic core and F(0) containing the membrane proton channel, linked together by a central stalk and a peripheral stalk. During catalysis, ATP synthesis in the catalytic domain of F(1) is coupled via a rotary mechanism of the central stalk subunits to proton translocation. In terms of biological role, this protein is part of the stalk that links CF(0) to CF(1). It either transmits conformational changes from CF(0) to CF(1) or is implicated in proton conduction. This Nitrosomonas eutropha (strain DSM 101675 / C91 / Nm57) protein is ATP synthase subunit delta.